The following is a 539-amino-acid chain: Alpha-copaene synthase (539 aa).

2 residues coordinate Mg(2+): aspartate 290 and aspartate 294. Positions 290, 294, and 432 each coordinate substrate. Residues 290–294 carry the DDXXD motif motif; the sequence is DDTFD.

The protein belongs to the terpene synthase family. As to quaternary structure, monomer. Mg(2+) is required as a cofactor. The cofactor is Mn(2+).

It localises to the cytoplasm. It carries out the reaction (2E,6E)-farnesyl diphosphate = alpha-copaene + diphosphate. It catalyses the reaction (2E,6E)-farnesyl diphosphate = (+)-germacrene D + diphosphate. The enzyme catalyses (2E,6E)-farnesyl diphosphate = (-)-(E)-beta-caryophyllene + diphosphate. The catalysed reaction is (2E,6E)-farnesyl diphosphate = delta-cadinene + diphosphate. It functions in the pathway secondary metabolite biosynthesis; terpenoid biosynthesis. Functionally, converts farnesyl diphosphate to the bicyclic olefins alpha-copaene, (E)-beta-caryophyllene, and to the macrocyclic sesquiterpene germacrene D. Also mediates the biosynthesis of minor sesquiterpene hydrocarbons including delta-cadinene. Involved in indirect defense by producing volatile signals attracting natural enemies of herbivores. The polypeptide is Alpha-copaene synthase (Zea mays (Maize)).